The primary structure comprises 313 residues: 2,3-dihydroxyphenylpropionate/2,3-dihydroxicinnamic acid 1,2-dioxygenase (313 aa).

The active-site Proton donor is histidine 115. Residue histidine 179 is the Proton acceptor of the active site.

The protein belongs to the LigB/MhpB extradiol dioxygenase family. In terms of assembly, homotetramer. Fe(2+) serves as cofactor.

It catalyses the reaction 3-(2,3-dihydroxyphenyl)propanoate + O2 = (2Z,4E)-2-hydroxy-6-oxonona-2,4-dienedioate + H(+). The enzyme catalyses (2E)-3-(2,3-dihydroxyphenyl)prop-2-enoate + O2 = (2Z,4E,7E)-2-hydroxy-6-oxonona-2,4,7-trienedioate + H(+). The protein operates within aromatic compound metabolism; 3-phenylpropanoate degradation. Functionally, catalyzes the non-heme iron(II)-dependent oxidative cleavage of 2,3-dihydroxyphenylpropionic acid and 2,3-dihydroxicinnamic acid into 2-hydroxy-6-ketononadienedioate and 2-hydroxy-6-ketononatrienedioate, respectively. This is 2,3-dihydroxyphenylpropionate/2,3-dihydroxicinnamic acid 1,2-dioxygenase from Mycobacterium ulcerans (strain Agy99).